A 226-amino-acid chain; its full sequence is Ribonuclease 3 (226 aa).

The 123-residue stretch at L7–D129 folds into the RNase III domain. E42 is a binding site for Mg(2+). D46 is a catalytic residue. Mg(2+) is bound by residues D115 and E118. Residue E118 is part of the active site. The 71-residue stretch at D156–Q226 folds into the DRBM domain.

This sequence belongs to the ribonuclease III family. In terms of assembly, homodimer. It depends on Mg(2+) as a cofactor.

The protein resides in the cytoplasm. It catalyses the reaction Endonucleolytic cleavage to 5'-phosphomonoester.. Functionally, digests double-stranded RNA. Involved in the processing of primary rRNA transcript to yield the immediate precursors to the large and small rRNAs (23S and 16S). Processes some mRNAs, and tRNAs when they are encoded in the rRNA operon. Processes pre-crRNA and tracrRNA of type II CRISPR loci if present in the organism. This Shewanella amazonensis (strain ATCC BAA-1098 / SB2B) protein is Ribonuclease 3.